Reading from the N-terminus, the 289-residue chain is Probable phosphoribulokinase (289 aa).

An ATP-binding site is contributed by 12 to 20 (GSSGAGTTT).

Belongs to the phosphoribulokinase family.

The catalysed reaction is D-ribulose 5-phosphate + ATP = D-ribulose 1,5-bisphosphate + ADP + H(+). In Escherichia coli (strain K12), this protein is Probable phosphoribulokinase (prkB).